A 444-amino-acid chain; its full sequence is Trigger factor (444 aa).

In terms of domain architecture, PPIase FKBP-type spans 161-246 (GDRVVIDFKG…VQKVEGQKLP (86 aa)).

The protein belongs to the FKBP-type PPIase family. Tig subfamily.

The protein localises to the cytoplasm. The enzyme catalyses [protein]-peptidylproline (omega=180) = [protein]-peptidylproline (omega=0). Involved in protein export. Acts as a chaperone by maintaining the newly synthesized protein in an open conformation. Functions as a peptidyl-prolyl cis-trans isomerase. This is Trigger factor from Saccharophagus degradans (strain 2-40 / ATCC 43961 / DSM 17024).